Reading from the N-terminus, the 801-residue chain is Phosphatidylinositol 4-kinase beta (801 aa).

Disordered regions lie at residues 1 to 29 (MGDT…GGSL), 101 to 121 (EDEM…RRRQ), and 250 to 304 (RKRE…EDEP). An N-acetylglycine modification is found at Gly2. The segment at 2–68 (GDTAVEPAPL…VRLLHGAVAV (67 aa)) is interaction with ACBD3. The PIK helical domain occupies 29 to 242 (LLSVITEGVG…GTKLRKLILS (214 aa)). The residue at position 258 (Ser258) is a Phosphoserine. Positions 259 to 268 (PALNTGLSPS) are enriched in polar residues. A Phosphothreonine modification is found at Thr263. 6 positions are modified to phosphoserine: Ser266, Ser275, Ser277, Ser284, Ser294, and Ser413. The segment covering 278 to 294 (DATASISLSSSLKRTAS) has biased composition (low complexity). Thr423 carries the phosphothreonine modification. Ser496 is subject to Phosphoserine. A phosphothreonine mark is found at Thr502 and Thr504. The 267-residue stretch at 520–786 (EPWQEKVRRI…MVDGSMRSIT (267 aa)) folds into the PI3K/PI4K catalytic domain. The interval 526–532 (VRRIREG) is G-loop. The tract at residues 653–661 (QVKDRHNGN) is catalytic loop. Positions 672 to 696 (HIDFGFILSSSPRNLGFETSAFKLT) are activation loop.

Belongs to the PI3/PI4-kinase family. Type III PI4K subfamily. In terms of assembly, interacts with ARF1 and ARF3 in the Golgi complex, but not with ARF4, ARF5 or ARF6. Interacts with NCS1/FREQ in a calcium-independent manner. Interacts with CALN1/CABP8 and CALN2/CABP7; in a calcium-dependent manner; this interaction competes with NCS1/FREQ binding. Interacts with ACBD3. Interacts with ARMH3, YWHAB, YWHAE, YWHAG, YWHAH, YWHAQ, YWHAZ and SFN. Interacts with GGA2 (via VHS domain); the interaction is important for PI4KB location at the Golgi apparatus membrane. Interacts with ATG9A. Mg(2+) is required as a cofactor. Mn(2+) serves as cofactor.

It localises to the endomembrane system. Its subcellular location is the mitochondrion outer membrane. The protein resides in the rough endoplasmic reticulum membrane. The protein localises to the golgi apparatus. It is found in the golgi apparatus membrane. It catalyses the reaction a 1,2-diacyl-sn-glycero-3-phospho-(1D-myo-inositol) + ATP = a 1,2-diacyl-sn-glycero-3-phospho-(1D-myo-inositol 4-phosphate) + ADP + H(+). With respect to regulation, inhibited by wortmannin. Increased kinase activity upon interaction with NCS1/FREQ. Phosphorylates phosphatidylinositol (PI) in the first committed step in the production of the second messenger inositol-1,4,5,-trisphosphate (PIP). May regulate Golgi disintegration/reorganization during mitosis, possibly via its phosphorylation. Involved in Golgi-to-plasma membrane trafficking. May play an important role in the inner ear development. The sequence is that of Phosphatidylinositol 4-kinase beta (PI4KB) from Sorex araneus (Eurasian common shrew).